The chain runs to 518 residues: Ent-cassadiene hydroxylase (518 aa).

A helical transmembrane segment spans residues 6 to 26 (LILALGLSVLFVLLSKLVSSA). Position 451 (Cys451) interacts with heme.

Belongs to the cytochrome P450 family. The cofactor is heme.

Its subcellular location is the membrane. The enzyme catalyses ent-cassa-12,15-diene + 3 reduced [NADPH--hemoprotein reductase] + 3 O2 = ent-3beta-hydroxycassa-12,15-dien-2-one + 3 oxidized [NADPH--hemoprotein reductase] + 4 H2O + 3 H(+). Functionally, enzyme of the diterpenoid metabolism involved in the biosynthesis of antibacterial oryzalides such as phytocassane. Catalyzes the hydroxylation of ent-cassa-12,15-diene to form ent-3beta-hydroxycassa-12,15-dien-2-one. The protein is Ent-cassadiene hydroxylase (CYP71Z7) of Oryza sativa subsp. japonica (Rice).